The chain runs to 107 residues: uncharacterized protein (107 aa).

Positions 80 to 98 are enriched in polar residues; that stretch reads SIDNLKPTSHQNGTTNDTA. The segment at 80–107 is disordered; the sequence is SIDNLKPTSHQNGTTNDTATMDHLEKNE.

This is an uncharacterized protein from Human spumaretrovirus (SFVcpz(hu)).